The chain runs to 145 residues: Ribonuclease H (145 aa).

The 142-residue stretch at 1–142 (MDTPVYLYTD…ADDLANRGAA (142 aa)) folds into the RNase H type-1 domain. Mg(2+)-binding residues include aspartate 10, glutamate 48, aspartate 70, and aspartate 134.

The protein belongs to the RNase H family. In terms of assembly, monomer. It depends on Mg(2+) as a cofactor.

It is found in the cytoplasm. The catalysed reaction is Endonucleolytic cleavage to 5'-phosphomonoester.. Endonuclease that specifically degrades the RNA of RNA-DNA hybrids. The sequence is that of Ribonuclease H from Neisseria gonorrhoeae (strain ATCC 700825 / FA 1090).